Here is a 378-residue protein sequence, read N- to C-terminus: 4-hydroxy-3-methylbut-2-en-1-yl diphosphate synthase (flavodoxin) (378 aa).

[4Fe-4S] cluster contacts are provided by C268, C271, C303, and E310.

This sequence belongs to the IspG family. [4Fe-4S] cluster serves as cofactor.

It catalyses the reaction (2E)-4-hydroxy-3-methylbut-2-enyl diphosphate + oxidized [flavodoxin] + H2O + 2 H(+) = 2-C-methyl-D-erythritol 2,4-cyclic diphosphate + reduced [flavodoxin]. It functions in the pathway isoprenoid biosynthesis; isopentenyl diphosphate biosynthesis via DXP pathway; isopentenyl diphosphate from 1-deoxy-D-xylulose 5-phosphate: step 5/6. Functionally, converts 2C-methyl-D-erythritol 2,4-cyclodiphosphate (ME-2,4cPP) into 1-hydroxy-2-methyl-2-(E)-butenyl 4-diphosphate. The chain is 4-hydroxy-3-methylbut-2-en-1-yl diphosphate synthase (flavodoxin) from Corynebacterium efficiens (strain DSM 44549 / YS-314 / AJ 12310 / JCM 11189 / NBRC 100395).